The primary structure comprises 305 residues: Plant-type L-asparaginase (305 aa).

Thr175 (nucleophile) is an active-site residue. Residues Arg202 to Asp205 and Thr224 to Gly227 contribute to the substrate site.

It belongs to the Ntn-hydrolase family. Heterotetramer of two alpha and two beta chains arranged as a dimer of alpha/beta heterodimers. Post-translationally, autocleaved. Generates the alpha and beta subunits. The N-terminal residue of the beta subunit is thought to be responsible for the nucleophile hydrolase activity.

The enzyme catalyses L-asparagine + H2O = L-aspartate + NH4(+). Functionally, catalyzes the hydrolysis of L-asparagine into L-aspartate and ammonia. In Pyrococcus horikoshii (strain ATCC 700860 / DSM 12428 / JCM 9974 / NBRC 100139 / OT-3), this protein is Plant-type L-asparaginase.